The following is a 473-amino-acid chain: MTRPVVTRFAPSPTGFLHIGGGRTALFNWLYARKLGGKMLLRIEDTDRQRSTQPAIDAILDGLKWLGIEWDGDTVYQFARAARHREVAEQLLAAGKAYRCYATAEELTAMRDKARAEGRSKLYDGSWRDRDPSEAPADMKPTIRLKAPLDGETVIEDQVQGRVVWQNENLDDLVLLRGDGTPTYMLAVVVDDHDMDVTHVIRGDDHLINAARQKQIYDAMGWELPVMAHIPLIHGPDGSKLSKRHGALGVDAYRAMGYLPAALRNYLVRLGWSHGDQEIFTTQEMIDAFDLAAIGRSAARFDFAKLESLNGHYIRQSDDQSLVTLLEDLLHYVPQGPAIAARLTDTTRAQLVQAMPGLKERAKTLLELLDNAGFIFADRPLAIDAKGQAVLTPDIRALIGRLRTALEDVSPWTAATTEAAMRTFAEQAGLKLGAVAQPLRVALTGRTTSPGIFDVLAVLGREECLSRLADQAA.

Positions 11-21 (PSPTGFLHIGG) match the 'HIGH' region motif. The short motif at 240 to 244 (KLSKR) is the 'KMSKS' region element. Lys243 is a binding site for ATP.

The protein belongs to the class-I aminoacyl-tRNA synthetase family. Glutamate--tRNA ligase type 1 subfamily. In terms of assembly, monomer.

It localises to the cytoplasm. The catalysed reaction is tRNA(Glu) + L-glutamate + ATP = L-glutamyl-tRNA(Glu) + AMP + diphosphate. Its function is as follows. Catalyzes the attachment of glutamate to tRNA(Glu) in a two-step reaction: glutamate is first activated by ATP to form Glu-AMP and then transferred to the acceptor end of tRNA(Glu). The polypeptide is Glutamate--tRNA ligase (Rhodopseudomonas palustris (strain HaA2)).